The following is a 432-amino-acid chain: Leucine-rich repeat-containing protein ODA7 (432 aa).

LRR repeat units follow at residues 47–68 (NLKA…PPLA), 69–90 (DLKC…EAVP), 91–112 (GLDT…ACCP), 113–134 (ALRT…AHLA), and 138–159 (ALQT…DILK). The 39-residue stretch at 173-211 (PVVSNIKNYRKVLVTSIPSLTYLDDRPVFDNERKIAQAW) folds into the LRRCT domain. Positions 212–243 (LEGGLEGERAMRNQLKEEEEERSRKNHEFMMQ) form a coiled coil. Disordered stretches follow at residues 297-332 (RPGE…AAAE) and 368-432 (EELD…NDLD). Low complexity-rich tracts occupy residues 323 to 332 (GAWGSGAAAE) and 407 to 425 (VAAA…ISAA).

The protein belongs to the DNAAF1 family. Interacts with both outer row and I1 inner row dyneins.

Its subcellular location is the cytoplasm. It localises to the cytoskeleton. The protein localises to the cilium axoneme. Its function is as follows. Cilium-specific protein required for cilia structures. Axonemal dynein-associated protein that participates in a structural link between inner and outer row dyneins. The chain is Leucine-rich repeat-containing protein ODA7 (ODA7) from Chlamydomonas reinhardtii (Chlamydomonas smithii).